Consider the following 323-residue polypeptide: Beta-ketoacyl-[acyl-carrier-protein] synthase III (323 aa).

Residues Cys114 and His250 contribute to the active site. The tract at residues 251–255 (QANIR) is ACP-binding. The active site involves Asn280.

This sequence belongs to the thiolase-like superfamily. FabH family. Homodimer.

Its subcellular location is the cytoplasm. It catalyses the reaction malonyl-[ACP] + acetyl-CoA + H(+) = 3-oxobutanoyl-[ACP] + CO2 + CoA. Its pathway is lipid metabolism; fatty acid biosynthesis. Functionally, catalyzes the condensation reaction of fatty acid synthesis by the addition to an acyl acceptor of two carbons from malonyl-ACP. Catalyzes the first condensation reaction which initiates fatty acid synthesis and may therefore play a role in governing the total rate of fatty acid production. Possesses both acetoacetyl-ACP synthase and acetyl transacylase activities. Its substrate specificity determines the biosynthesis of branched-chain and/or straight-chain of fatty acids. This chain is Beta-ketoacyl-[acyl-carrier-protein] synthase III, found in Ruegeria pomeroyi (strain ATCC 700808 / DSM 15171 / DSS-3) (Silicibacter pomeroyi).